Reading from the N-terminus, the 326-residue chain is Mitochondrial glycine transporter (326 aa).

3 Solcar repeats span residues 22 to 106, 135 to 216, and 228 to 312; these read SKTT…LRTS, SANL…LKRY, and SSSS…LILR. The next 6 membrane-spanning stretches (helical) occupy residues 28 to 53, 81 to 107, 138 to 163, 191 to 214, 232 to 258, and 287 to 305; these read FGAG…TRVQ, GTLP…RTSL, LATG…VRYE, GFGA…EQLK, INFV…KTRL, and GLGL…AWTV.

The protein belongs to the mitochondrial carrier (TC 2.A.29) family. SLC25A38 subfamily.

It is found in the mitochondrion inner membrane. The enzyme catalyses glycine(in) = glycine(out). Its function is as follows. Mitochondrial glycine transporter that imports glycine into the mitochondrial matrix. Plays an important role in providing glycine for the first enzymatic step in heme biosynthesis, the condensation of glycine with succinyl-CoA to produce 5-aminolevulinate (ALA) in the mitochondrial matrix. The chain is Mitochondrial glycine transporter from Emericella nidulans (strain FGSC A4 / ATCC 38163 / CBS 112.46 / NRRL 194 / M139) (Aspergillus nidulans).